A 328-amino-acid chain; its full sequence is tRNA uridine(34) hydroxylase (328 aa).

The 95-residue stretch at 130–224 (LDEDTVVLDT…YGKDPEVQGE (95 aa)) folds into the Rhodanese domain. C184 functions as the Cysteine persulfide intermediate in the catalytic mechanism.

This sequence belongs to the TrhO family.

The catalysed reaction is uridine(34) in tRNA + AH2 + O2 = 5-hydroxyuridine(34) in tRNA + A + H2O. Its function is as follows. Catalyzes oxygen-dependent 5-hydroxyuridine (ho5U) modification at position 34 in tRNAs. This chain is tRNA uridine(34) hydroxylase, found in Streptococcus pyogenes serotype M49 (strain NZ131).